The sequence spans 663 residues: Transmembrane 9 superfamily member 2 (663 aa).

A signal peptide spans 1 to 28 (MSSRPPASLPARGPRLLLLSLLLLGTVP). Residues 29 to 300 (GPRPGSAFYL…LESMPHTHIQ (272 aa)) lie on the Lumenal side of the membrane. A helical membrane pass occupies residues 301-321 (WFSIMNSLVIVLFLSGMVAMI). Residues 322-374 (MLRTLHKDIARYNQMDSTEDAQEEFGWKLVHGDIFRPPRKGMLLSVFLGSGTQ) lie on the Cytoplasmic side of the membrane. The helical transmembrane segment at 375 to 395 (ILIMTFVTLFFACLGFLSPAN) threads the bilayer. Residues 396-398 (RGA) lie on the Lumenal side of the membrane. Residues 399-419 (LMTCAVVLWVLLGTPAGYVAA) form a helical membrane-spanning segment. Residues 420 to 437 (RFYKSFGGEKWKTNVLLT) are Cytoplasmic-facing. A helical transmembrane segment spans residues 438–458 (SFLCPGIVFADFFIMNLILWG). Over 459–466 (EGSSAAIP) the chain is Lumenal. The chain crosses the membrane as a helical span at residues 467-487 (FGTLVAILALWFCISVPLTFI). Residues 488–522 (GAYFGFKKNAIEHPVRTNQIPRQIPEQSFYTKPLP) are Cytoplasmic-facing. Residues 523-543 (GIIMGGILPFGCIFIQLFFIL) form a helical membrane-spanning segment. At 544 to 554 (NSIWSHQMYYM) the chain is on the lumenal side. A helical membrane pass occupies residues 555–575 (FGFLFLVFIILVITCSEATIL). The Cytoplasmic segment spans residues 576 to 591 (LCYFHLCAEDYHWQWR). The chain crosses the membrane as a helical span at residues 592–612 (SFLTSGFTAVYFLVYAIHYFF). Over 613–631 (SKLQITGTASTILYFGYTM) the chain is Lumenal. A helical membrane pass occupies residues 632–652 (IMVLIFFLFTGTIGFFACFWF). Residues 653-663 (VTKIYSVVKVD) lie on the Cytoplasmic side of the membrane.

Belongs to the nonaspanin (TM9SF) (TC 9.A.2) family.

It is found in the endosome membrane. The protein localises to the golgi outpost. The protein resides in the cytoplasm. It localises to the cytoskeleton. Its subcellular location is the microtubule organizing center. In the intracellular compartments, may function as a channel or small molecule transporter. The polypeptide is Transmembrane 9 superfamily member 2 (Tm9sf2) (Rattus norvegicus (Rat)).